Consider the following 516-residue polypeptide: BAR/IMD domain-containing adapter protein 2-like 2 (516 aa).

Positions 1-227 constitute an IMD domain; it reads MSGVNSDLLH…PTPLDQEAQL (227 aa). Residues 200 to 273 are disordered; that stretch reads ADGWKEKVSE…SSSVGESLGL (74 aa). Basic and acidic residues predominate over residues 201-212; that stretch reads DGWKEKVSESRS. Residues 226 to 236 are compositionally biased toward polar residues; it reads QLKSSVGSLLQ. Residues 238 to 247 are compositionally biased toward basic and acidic residues; that stretch reads GDREMDREPL. A compositionally biased stretch (low complexity) spans 249-270; the sequence is RVPSRAPSPLPSRSRSSSVGES. One can recognise an SH3 domain in the interval 274-337; sequence GGGRSMRAIV…PAAYVASTED (64 aa). Positions 355–376 are enriched in polar residues; the sequence is LLEPTSQSESDTQTYSEVSSPV. The interval 355–516 is disordered; sequence LLEPTSQSES…TNDRSAPRIQ (162 aa). Residues 434-450 are compositionally biased toward basic and acidic residues; that stretch reads PDRRAESHFESKVELKN. The segment covering 454-465 has biased composition (pro residues); sequence LPPPAPPLPNSP.

Its subcellular location is the cell membrane. Functionally, phosphoinositides-binding protein that induces the formation of planar or gently curved membrane structures. This is BAR/IMD domain-containing adapter protein 2-like 2 (baiap2l2) from Danio rerio (Zebrafish).